Consider the following 1085-residue polypeptide: Toxin VasX (1085 aa).

The tract at residues 1–20 is disordered; that stretch reads MSNPNQAAKTGQTNDAQNPA. The next 4 helical transmembrane spans lie at 753-773, 813-833, 860-880, and 884-904; these read ALGE…AISA, IALV…ESWG, IIFY…PSIA, and AGWM…GVIL.

The protein localises to the secreted. The protein resides in the host membrane. Toxin secreted by the type VI (T6SS) secretion system that acts on prokaryotic target cells. Acts in conjunction with VasW, an accessory protein to VasX, to compromise the inner membrane of prokaryotic target cells. The chain is Toxin VasX from Vibrio cholerae serotype O1 (strain ATCC 39315 / El Tor Inaba N16961).